The chain runs to 156 residues: Small ribosomal subunit protein uS7 (156 aa).

The protein belongs to the universal ribosomal protein uS7 family. In terms of assembly, part of the 30S ribosomal subunit. Contacts proteins S9 and S11.

Functionally, one of the primary rRNA binding proteins, it binds directly to 16S rRNA where it nucleates assembly of the head domain of the 30S subunit. Is located at the subunit interface close to the decoding center, probably blocks exit of the E-site tRNA. The protein is Small ribosomal subunit protein uS7 of Campylobacter concisus (strain 13826).